The following is a 269-amino-acid chain: MYFMKNVITLIGLVLFSSFCFASEPLPWQMGFQPPASPIMEELHKFHDFLLYISTAIVLFVAGLLVFVCIKFNARNNPVPAKFSHNILIEIIWTVIPIIILVIIAVPSFRILRHAEKIPEADLTIKVVGYQWYWHYIYPDHNDIEFDSVMISDENLKPDQKRLLDVDNRIVIPENATVRFLITASDVIHSFAVPSLGFKIDAVPGRVNETWTRVAKKGVYYGQCSELCGINHGFMPIAIEVVSKEDFDNWVASKNKVAANGENSKLAAN.

The next 3 helical transmembrane spans lie at Ile8–Trp28, Leu50–Ile70, and Ile87–Pro107. Cu cation-binding residues include His189, Cys224, Cys228, and His232.

This sequence belongs to the cytochrome c oxidase subunit 2 family. Requires Cu cation as cofactor. It depends on heme as a cofactor.

Its subcellular location is the cell membrane. It carries out the reaction 4 Fe(II)-[cytochrome c] + O2 + 8 H(+)(in) = 4 Fe(III)-[cytochrome c] + 2 H2O + 4 H(+)(out). Its function is as follows. Subunits I and II form the functional core of the enzyme complex. Electrons originating in cytochrome c are transferred via heme a and Cu(A) to the binuclear center formed by heme a3 and Cu(B). The chain is Probable cytochrome c oxidase subunit 2 (ctaC) from Rickettsia bellii (strain RML369-C).